A 101-amino-acid chain; its full sequence is MLSLSHYLILGAVLFAISVVGIFLNRKNLIVLLMAIELMLLAVNLNFIAFSHYLGDIAGQVFVFFILTVAAAESAIGLAILVVMFRNLRTIHVDDLDSLKG.

The next 3 membrane-spanning stretches (helical) occupy residues 4 to 24, 30 to 50, and 61 to 81; these read LSHY…GIFL, IVLL…FIAF, and VFVF…LAIL.

This sequence belongs to the complex I subunit 4L family. NDH-1 is composed of 14 different subunits. Subunits NuoA, H, J, K, L, M, N constitute the membrane sector of the complex.

Its subcellular location is the cell inner membrane. It carries out the reaction a quinone + NADH + 5 H(+)(in) = a quinol + NAD(+) + 4 H(+)(out). In terms of biological role, NDH-1 shuttles electrons from NADH, via FMN and iron-sulfur (Fe-S) centers, to quinones in the respiratory chain. The immediate electron acceptor for the enzyme in this species is believed to be ubiquinone. Couples the redox reaction to proton translocation (for every two electrons transferred, four hydrogen ions are translocated across the cytoplasmic membrane), and thus conserves the redox energy in a proton gradient. This is NADH-quinone oxidoreductase subunit K from Azoarcus sp. (strain BH72).